The primary structure comprises 396 residues: S-adenosylmethionine synthase 1 (396 aa).

Residue Glu-12 coordinates Mg(2+). His-18 is an ATP binding site. Glu-46 is a K(+) binding site. L-methionine contacts are provided by Glu-59 and Gln-102. ATP-binding positions include 170 to 172 (DGK), 238 to 241 (SGRF), Asp-249, 255 to 256 (RK), Ala-272, Lys-276, and Lys-280. Asp-249 is an L-methionine binding site. Lys-280 is a binding site for L-methionine.

It belongs to the AdoMet synthase family. As to quaternary structure, homotetramer. Mn(2+) is required as a cofactor. Mg(2+) serves as cofactor. Requires Co(2+) as cofactor. It depends on K(+) as a cofactor.

The protein localises to the cytoplasm. The catalysed reaction is L-methionine + ATP + H2O = S-adenosyl-L-methionine + phosphate + diphosphate. Its pathway is amino-acid biosynthesis; S-adenosyl-L-methionine biosynthesis; S-adenosyl-L-methionine from L-methionine: step 1/1. Functionally, catalyzes the formation of S-adenosylmethionine from methionine and ATP. The reaction comprises two steps that are both catalyzed by the same enzyme: formation of S-adenosylmethionine (AdoMet) and triphosphate, and subsequent hydrolysis of the triphosphate. The sequence is that of S-adenosylmethionine synthase 1 (SAM1) from Oryza sativa subsp. japonica (Rice).